The sequence spans 216 residues: Somatotropin (216 aa).

Positions 1–26 (MAADSQTPWLLTFSLLCLLWPQEAGA) are cleaved as a signal peptide. Residue His-45 participates in Zn(2+) binding. The cysteines at positions 78 and 189 are disulfide-linked. Phosphoserine is present on Ser-131. Residue Glu-198 coordinates Zn(2+). A disulfide bridge connects residues Cys-206 and Cys-214.

The protein belongs to the somatotropin/prolactin family.

It is found in the secreted. Its function is as follows. Plays an important role in growth control. Its major role in stimulating body growth is to stimulate the liver and other tissues to secrete IGF1. It stimulates both the differentiation and proliferation of myoblasts. It also stimulates amino acid uptake and protein synthesis in muscle and other tissues. The polypeptide is Somatotropin (Gh1) (Rattus norvegicus (Rat)).